We begin with the raw amino-acid sequence, 204 residues long: Peptidyl-tRNA hydrolase (204 aa).

Tyr14 serves as a coordination point for tRNA. Catalysis depends on His19, which acts as the Proton acceptor. Residues Tyr64, Asn66, and Asn112 each contribute to the tRNA site.

Belongs to the PTH family. In terms of assembly, monomer.

The protein resides in the cytoplasm. The catalysed reaction is an N-acyl-L-alpha-aminoacyl-tRNA + H2O = an N-acyl-L-amino acid + a tRNA + H(+). Hydrolyzes ribosome-free peptidyl-tRNAs (with 1 or more amino acids incorporated), which drop off the ribosome during protein synthesis, or as a result of ribosome stalling. In terms of biological role, catalyzes the release of premature peptidyl moieties from peptidyl-tRNA molecules trapped in stalled 50S ribosomal subunits, and thus maintains levels of free tRNAs and 50S ribosomes. The polypeptide is Peptidyl-tRNA hydrolase (Nitrobacter hamburgensis (strain DSM 10229 / NCIMB 13809 / X14)).